The following is a 150-amino-acid chain: UPF0178 protein Sbal223_2514 (150 aa).

The protein belongs to the UPF0178 family.

In Shewanella baltica (strain OS223), this protein is UPF0178 protein Sbal223_2514.